A 129-amino-acid polypeptide reads, in one-letter code: Protein GLUTAMINE DUMPER 2 (129 aa).

The Extracellular segment spans residues 1–34; that stretch reads MQTMEGRQYNYQDSINASSSMVVPHSPWHSPVPY. The helical transmembrane segment at 35-55 threads the bilayer; that stretch reads LFGGLAAMLALICVALLILAC. At 56-129 the chain is on the cytoplasmic side; sequence SYWRLSGSAE…DHNEEEGRRG (74 aa). Residues 66 to 89 form a disordered region; it reads RDLEAGDDAKPDNDTNKTKHTEMP. The short motif at 94–98 is the VIMAG element; that stretch reads VIMAG. The interval 106 to 129 is disordered; the sequence is ATPATRSEQSCTCGDHNEEEGRRG. Basic and acidic residues predominate over residues 120–129; sequence DHNEEEGRRG.

This sequence belongs to the GLUTAMINE DUMPER 1 (TC 9.B.60) family. As to expression, expressed in the vascular tissues.

Its subcellular location is the membrane. Functionally, probable subunit of an amino acid transporter involved in the regulation of the amino acid metabolism. Stimulates amino acid export by activating nonselective amino acid facilitators. In Arabidopsis thaliana (Mouse-ear cress), this protein is Protein GLUTAMINE DUMPER 2 (GDU2).